The chain runs to 519 residues: GMP synthase [glutamine-hydrolyzing] (519 aa).

Residues 4–201 (AILILDFGSQ…VHDICDAGYD (198 aa)) form the Glutamine amidotransferase type-1 domain. Catalysis depends on Cys-81, which acts as the Nucleophile. Residues His-175 and Glu-177 contribute to the active site. In terms of domain architecture, GMPS ATP-PPase spans 202 to 394 (WNMPDYVEEA…LGLPRDLVFR (193 aa)). 229–235 (SGGVDSS) lines the ATP pocket.

As to quaternary structure, homodimer.

The enzyme catalyses XMP + L-glutamine + ATP + H2O = GMP + L-glutamate + AMP + diphosphate + 2 H(+). It participates in purine metabolism; GMP biosynthesis; GMP from XMP (L-Gln route): step 1/1. Its function is as follows. Catalyzes the synthesis of GMP from XMP. The polypeptide is GMP synthase [glutamine-hydrolyzing] (Nitrosomonas eutropha (strain DSM 101675 / C91 / Nm57)).